The following is a 599-amino-acid chain: Sulfite reductase [NADPH] flavoprotein alpha-component (599 aa).

Positions 64 to 202 constitute a Flavodoxin-like domain; it reads ITIISASQTG…AASEWRARVV (139 aa). Residues 70 to 75, 117 to 120, and 153 to 162 each bind FMN; these read SQTGNA, STQG, and LGDSSYEFFC. Residues 234 to 448 form the FAD-binding FR-type domain; the sequence is DAPLVASLSV…IEHNDNFRLP (215 aa). FAD is bound by residues Thr-322, Ala-356, 386-389, 404-406, Tyr-410, and 419-422; these read RLYS, TVG, and GGAS. NADP(+) is bound by residues 519–520, 525–529, and Asp-561; these read SR and KVYVQ. Tyr-599 serves as a coordination point for FAD.

This sequence belongs to the NADPH-dependent sulphite reductase flavoprotein subunit CysJ family. In the N-terminal section; belongs to the flavodoxin family. It in the C-terminal section; belongs to the flavoprotein pyridine nucleotide cytochrome reductase family. In terms of assembly, alpha(8)-beta(8). The alpha component is a flavoprotein, the beta component is a hemoprotein. FAD serves as cofactor. Requires FMN as cofactor.

It carries out the reaction hydrogen sulfide + 3 NADP(+) + 3 H2O = sulfite + 3 NADPH + 4 H(+). It participates in sulfur metabolism; hydrogen sulfide biosynthesis; hydrogen sulfide from sulfite (NADPH route): step 1/1. Functionally, component of the sulfite reductase complex that catalyzes the 6-electron reduction of sulfite to sulfide. This is one of several activities required for the biosynthesis of L-cysteine from sulfate. The flavoprotein component catalyzes the electron flow from NADPH -&gt; FAD -&gt; FMN to the hemoprotein component. This chain is Sulfite reductase [NADPH] flavoprotein alpha-component, found in Escherichia coli O157:H7.